Reading from the N-terminus, the 379-residue chain is UDP-4-amino-4-deoxy-L-arabinose--oxoglutarate aminotransferase (379 aa).

Residue lysine 182 is modified to N6-(pyridoxal phosphate)lysine.

The protein belongs to the DegT/DnrJ/EryC1 family. ArnB subfamily. Homodimer. The cofactor is pyridoxal 5'-phosphate.

The enzyme catalyses UDP-4-amino-4-deoxy-beta-L-arabinose + 2-oxoglutarate = UDP-beta-L-threo-pentopyranos-4-ulose + L-glutamate. It functions in the pathway nucleotide-sugar biosynthesis; UDP-4-deoxy-4-formamido-beta-L-arabinose biosynthesis; UDP-4-deoxy-4-formamido-beta-L-arabinose from UDP-alpha-D-glucuronate: step 2/3. It participates in bacterial outer membrane biogenesis; lipopolysaccharide biosynthesis. In terms of biological role, catalyzes the conversion of UDP-4-keto-arabinose (UDP-Ara4O) to UDP-4-amino-4-deoxy-L-arabinose (UDP-L-Ara4N). The modified arabinose is attached to lipid A and is required for resistance to polymyxin and cationic antimicrobial peptides. This is UDP-4-amino-4-deoxy-L-arabinose--oxoglutarate aminotransferase from Salmonella dublin (strain CT_02021853).